Here is an 83-residue protein sequence, read N- to C-terminus: Small ribosomal subunit protein uS17 (83 aa).

This sequence belongs to the universal ribosomal protein uS17 family. Part of the 30S ribosomal subunit.

Functionally, one of the primary rRNA binding proteins, it binds specifically to the 5'-end of 16S ribosomal RNA. This Thermodesulfovibrio yellowstonii (strain ATCC 51303 / DSM 11347 / YP87) protein is Small ribosomal subunit protein uS17.